A 125-amino-acid polypeptide reads, in one-letter code: Fluoride-specific ion channel FluC (125 aa).

4 helical membrane-spanning segments follow: residues 6-26, 34-54, 68-88, and 98-118; these read GFIALAGAAGTLARYWLSGLV, FPWGTAVVNILGCFLFGLVWE, AVLLTGFMGAFTTFSTFIFES, and LALLANLGFQTILGFAALFAG. Na(+) contacts are provided by G76 and T79.

Belongs to the fluoride channel Fluc/FEX (TC 1.A.43) family.

The protein resides in the cell inner membrane. The catalysed reaction is fluoride(in) = fluoride(out). With respect to regulation, na(+) is not transported, but it plays an essential structural role and its presence is essential for fluoride channel function. Functionally, fluoride-specific ion channel. Important for reducing fluoride concentration in the cell, thus reducing its toxicity. This is Fluoride-specific ion channel FluC from Solidesulfovibrio magneticus (strain ATCC 700980 / DSM 13731 / RS-1) (Desulfovibrio magneticus).